Consider the following 306-residue polypeptide: Serine/threonine-protein phosphatase PP2A-1 catalytic subunit (306 aa).

Residues Asp54, His56, Asp82, and Asn114 each coordinate Mn(2+). Catalysis depends on His115, which acts as the Proton donor. Mn(2+) contacts are provided by His164 and His238.

It belongs to the PPP phosphatase family. PP-2A subfamily. Mn(2+) serves as cofactor.

It is found in the cytoplasm. The enzyme catalyses O-phospho-L-seryl-[protein] + H2O = L-seryl-[protein] + phosphate. It carries out the reaction O-phospho-L-threonyl-[protein] + H2O = L-threonyl-[protein] + phosphate. The sequence is that of Serine/threonine-protein phosphatase PP2A-1 catalytic subunit (PP2A1) from Oryza sativa subsp. indica (Rice).